A 246-amino-acid chain; its full sequence is Ribonuclease PH (246 aa).

Residues Arg91 and 129-131 contribute to the phosphate site; that span reads GTR.

It belongs to the RNase PH family. As to quaternary structure, homohexameric ring arranged as a trimer of dimers.

It catalyses the reaction tRNA(n+1) + phosphate = tRNA(n) + a ribonucleoside 5'-diphosphate. In terms of biological role, phosphorolytic 3'-5' exoribonuclease that plays an important role in tRNA 3'-end maturation. Removes nucleotide residues following the 3'-CCA terminus of tRNAs; can also add nucleotides to the ends of RNA molecules by using nucleoside diphosphates as substrates, but this may not be physiologically important. Probably plays a role in initiation of 16S rRNA degradation (leading to ribosome degradation) during starvation. The protein is Ribonuclease PH of Burkholderia ambifaria (strain MC40-6).